The sequence spans 76 residues: Putative small nuclear ribonucleoprotein G-like protein 15 (76 aa).

The Sm domain maps to Ala-4–Val-76.

It belongs to the snRNP Sm proteins family.

The protein localises to the nucleus. Its function is as follows. Associated with snRNP U1, U2, U4/U6 and U5. This is Putative small nuclear ribonucleoprotein G-like protein 15 (SNRPGP15) from Homo sapiens (Human).